The sequence spans 270 residues: MPSSFDLLGEMIDLLQTEQLTSYWACPLPNALTKRQDLWRALINQRPALPLSKDYLNLEDTYLDDWRASFVPVSVKDCQKTNYTSLFLYHGDIRYLAVDAIVNAANSELLGCFIPNHGCIDNAIHTFAGSRLRLACQAIMTEQGRKEAIGQAKLTSAYHLPASYIIHTVGPRITKGRHVSPIRADLLARCYRSSLDLAVKAGLTSLAFCSISTGEFGFPKKEAAQIAIKTVLKWQAEHPESKTLTIIFNTFTSEDKALYDTYLQKENNCE.

Positions Val-73–Asn-267 constitute a Macro domain. Positions 92, 93, and 106 each coordinate ADP-D-ribose. Positions 112, 117, and 119 each coordinate Zn(2+). Residues Cys-119, Ile-120, Asp-121, Ser-212, Thr-213, Gly-214, Glu-215, and Phe-216 each contribute to the ADP-D-ribose site.

Belongs to the MacroD-type family. Zn-Macro subfamily. Monomer. Interacts with the lipoylated form of GcvH-L. Zn(2+) is required as a cofactor.

The catalysed reaction is 4-O-(ADP-D-ribosyl)-L-aspartyl-[protein] + H2O = L-aspartyl-[protein] + ADP-D-ribose + H(+). It catalyses the reaction 5-O-(ADP-D-ribosyl)-L-glutamyl-[protein] + H2O = L-glutamyl-[protein] + ADP-D-ribose + H(+). It carries out the reaction S-(ADP-D-ribosyl)-L-cysteinyl-[protein] + H2O = ADP-D-ribose + L-cysteinyl-[protein]. In terms of biological role, ADP-ribosylhydrolase that specifically reverses the SirTM-mediated mono-ADP-ribosylation at an asparatate residue of GcvH-L (SpyM50867), by releasing ADP-ribose from the target protein. May play a role in the regulation of the response to host-induced oxidative stress. It can also hydrolyze ADP-ribosyl-glutamate bonds and ADP-ribosyl-cysteine bonds. In vitro, it can remove the ADP-ribosyl modification from the human mono-ADP-ribosylated PARP1 E988Q mutant, which is primarily modified on glutamate site with only minor aspartate contribution. It can also hydrolyze the ADP-ribosyl-cysteinyl glycosidic bond of a Cys-ADP-ribosylated synthetic peptide. In Streptococcus pyogenes serotype M5 (strain Manfredo), this protein is Protein-ADP-ribose hydrolase.